A 125-amino-acid polypeptide reads, in one-letter code: Large ribosomal subunit protein bL19 (125 aa).

It belongs to the bacterial ribosomal protein bL19 family.

This protein is located at the 30S-50S ribosomal subunit interface and may play a role in the structure and function of the aminoacyl-tRNA binding site. The polypeptide is Large ribosomal subunit protein bL19 (Synechococcus sp. (strain JA-2-3B'a(2-13)) (Cyanobacteria bacterium Yellowstone B-Prime)).